The chain runs to 790 residues: Cadherin-18 (790 aa).

Residues 1-24 (MKITSTSCICPVLVCLCFVQRCYG) form the signal peptide. Positions 25–53 (TTHHGSIRGTRNQTKHIEGETEVHHRPKR) are excised as a propeptide. N-linked (GlcNAc...) asparagine glycosylation occurs at Asn-36. Cadherin domains are found at residues 54 to 159 (GWVW…APKF), 160 to 268 (TDGP…PPRF), 269 to 383 (PQKH…PPLF), 384 to 486 (SMPS…DNPP), and 487 to 608 (ELAR…FLSS). Residues 54–608 (GWVWNQFFVL…TCHAEAFLSS (555 aa)) lie on the Extracellular side of the membrane. Residue Asn-255 is glycosylated (N-linked (GlcNAc...) asparagine). Residues Asn-455 and Asn-536 are each glycosylated (N-linked (GlcNAc...) asparagine). A helical transmembrane segment spans residues 609–636 (AGLSTGALIAILLCVVILLAIVVLFITL). Residues 637 to 790 (RRSKKEPLII…YGEIESERTT (154 aa)) lie on the Cytoplasmic side of the membrane. Residue Ser-786 is modified to Phosphoserine.

The protein resides in the cell membrane. In terms of biological role, cadherins are calcium-dependent cell adhesion proteins. They preferentially interact with themselves in a homophilic manner in connecting cells; cadherins may thus contribute to the sorting of heterogeneous cell types. The sequence is that of Cadherin-18 (CDH18) from Bos taurus (Bovine).